We begin with the raw amino-acid sequence, 693 residues long: Elongation factor G (693 aa).

The 275-residue stretch at lysine 8 to leucine 282 folds into the tr-type G domain. Residues alanine 17–threonine 24, aspartate 81–histidine 85, and asparagine 135–aspartate 138 each bind GTP.

The protein belongs to the TRAFAC class translation factor GTPase superfamily. Classic translation factor GTPase family. EF-G/EF-2 subfamily.

It localises to the cytoplasm. Its function is as follows. Catalyzes the GTP-dependent ribosomal translocation step during translation elongation. During this step, the ribosome changes from the pre-translocational (PRE) to the post-translocational (POST) state as the newly formed A-site-bound peptidyl-tRNA and P-site-bound deacylated tRNA move to the P and E sites, respectively. Catalyzes the coordinated movement of the two tRNA molecules, the mRNA and conformational changes in the ribosome. The sequence is that of Elongation factor G from Macrococcus caseolyticus (strain JCSC5402) (Macrococcoides caseolyticum).